A 220-amino-acid chain; its full sequence is Putative F-box protein At3g20705 (220 aa).

Residues 1-51 (MMMMSNLPNDLVEEILSRVTVTFMRTVRSICKKWNALTKDRSFTNKYIRNI) form the F-box domain.

The protein is Putative F-box protein At3g20705 of Arabidopsis thaliana (Mouse-ear cress).